A 306-amino-acid chain; its full sequence is Putative NylC-analogous protein (306 aa).

Belongs to the peptidase S58 family.

The chain is Putative NylC-analogous protein from Agromyces sp. (strain KY5R).